Reading from the N-terminus, the 504-residue chain is Glutamate--tRNA ligase (504 aa).

The 'HIGH' region motif lies at proline 25–leucine 35. Cysteine 122, cysteine 124, cysteine 149, and glutamate 151 together coordinate Zn(2+). The 'KMSKS' region motif lies at lysine 270–arginine 274. Residue lysine 273 participates in ATP binding.

This sequence belongs to the class-I aminoacyl-tRNA synthetase family. Glutamate--tRNA ligase type 1 subfamily. Monomer. Requires Zn(2+) as cofactor.

It is found in the cytoplasm. It carries out the reaction tRNA(Glu) + L-glutamate + ATP = L-glutamyl-tRNA(Glu) + AMP + diphosphate. Its function is as follows. Catalyzes the attachment of glutamate to tRNA(Glu) in a two-step reaction: glutamate is first activated by ATP to form Glu-AMP and then transferred to the acceptor end of tRNA(Glu). The protein is Glutamate--tRNA ligase of Streptomyces avermitilis (strain ATCC 31267 / DSM 46492 / JCM 5070 / NBRC 14893 / NCIMB 12804 / NRRL 8165 / MA-4680).